We begin with the raw amino-acid sequence, 154 residues long: Troponin C, isoform 1 (154 aa).

EF-hand domains follow at residues 8–43, 44–79, 84–119, and 120–154; these read EQTA…LGHQ, LDDA…FLVE, AMMA…LDDK, and LTND…GGDD. Residues Asp57, Asp59, Ser61, Gln63, and Glu68 each coordinate Ca(2+). Ca(2+) contacts are provided by Asp133, Asp135, Ser137, Thr139, and Glu144.

Belongs to the troponin C family. As to expression, present only in adult muscles.

The polypeptide is Troponin C, isoform 1 (TpnC41C) (Drosophila melanogaster (Fruit fly)).